The chain runs to 471 residues: Adenosylhomocysteinase (471 aa).

Substrate is bound by residues threonine 60, aspartate 135, and glutamate 196. 197–199 serves as a coordination point for NAD(+); it reads TTT. Residues lysine 226 and aspartate 230 each coordinate substrate. Residues asparagine 231, 260 to 265, glutamate 283, asparagine 318, 339 to 341, and asparagine 387 each bind NAD(+); these read GYGDVG and IGH.

It belongs to the adenosylhomocysteinase family. NAD(+) is required as a cofactor.

The protein resides in the cytoplasm. The catalysed reaction is S-adenosyl-L-homocysteine + H2O = L-homocysteine + adenosine. Its pathway is amino-acid biosynthesis; L-homocysteine biosynthesis; L-homocysteine from S-adenosyl-L-homocysteine: step 1/1. Its function is as follows. May play a key role in the regulation of the intracellular concentration of adenosylhomocysteine. In Chlorobium phaeovibrioides (strain DSM 265 / 1930) (Prosthecochloris vibrioformis (strain DSM 265)), this protein is Adenosylhomocysteinase.